The chain runs to 682 residues: K(+)-insensitive pyrophosphate-energized proton pump 2 (682 aa).

Transmembrane regions (helical) follow at residues 1 to 21 (MELFPIIPAGGILALLVALYM), 56 to 76 (TIAGLALIVAVLLALLTRQYH), 78 to 98 (AVAFITGAFASALSGYIGMYV), 130 to 150 (LAVTALSLLGVTSLFYAFGGA), and 160 to 180 (IVGFGFGASFVALFAQLSGGI). A substrate-binding site is contributed by Lys183. Mg(2+) is bound by residues Asp186, Asp190, and Asp216. A run of 7 helical transmembrane segments spans residues 237–257 (IGAMILGIALVPFFGVKGIVF), 258–278 (PLVARAAGIIASIIGMFFVRA), 291–311 (GYIVTSILAIIFLYPISRYML), 318–338 (FIYFYGAGIIGIVLSFIFVLI), 353–373 (IARASITGPATNIISGVAVGF), 375–395 (STALPVVFISLAILGAYWLGL), and 404–424 (LYGTAVATMGMLSTAAYILAM). Asp432 contributes to the Mg(2+) binding site. A run of 4 helical transmembrane segments spans residues 468 to 488 (YAIGSAALATFLLFSAYIDEV), 506 to 526 (EVFVGAFIAAMMVLLFSSTAI), 574 to 594 (MVLPGLIVVITPIIVGLVLKA), and 595 to 615 (EAAAAFLMVGTITGVIVALFL). 3 residues coordinate Ca(2+): Asp623, Asp649, and Asp653. Lys656 serves as a coordination point for substrate. Residues 662–682 (SLHVLVKLISTITLVLAGLFI) form a helical membrane-spanning segment.

It belongs to the H(+)-translocating pyrophosphatase (TC 3.A.10) family. K(+)-insensitive subfamily. In terms of assembly, homodimer. Mg(2+) is required as a cofactor.

Its subcellular location is the cell membrane. It catalyses the reaction diphosphate + H2O + H(+)(in) = 2 phosphate + 2 H(+)(out). Its function is as follows. Proton pump that utilizes the energy of pyrophosphate hydrolysis as the driving force for proton movement across the membrane. Generates a proton motive force. This is K(+)-insensitive pyrophosphate-energized proton pump 2 from Moorella thermoacetica (strain ATCC 39073 / JCM 9320).